A 156-amino-acid polypeptide reads, in one-letter code: Ribonuclease H (156 aa).

The RNase H type-1 domain occupies E3–E144. Mg(2+) contacts are provided by D12, E50, D72, and D136.

This sequence belongs to the RNase H family. Monomer. Mg(2+) serves as cofactor.

It localises to the cytoplasm. It catalyses the reaction Endonucleolytic cleavage to 5'-phosphomonoester.. Its function is as follows. Endonuclease that specifically degrades the RNA of RNA-DNA hybrids. This Shewanella baltica (strain OS223) protein is Ribonuclease H.